A 368-amino-acid chain; its full sequence is MPKKTDTPAYKPSIYSLTRDELIAWAIEHGEKKFRASQIWDWLYKKRVQSFDEMTNISKDFIALLNENFVVNPLKQRIVQESADGTVKYLFELPDGMLIETVLMRQHYGLSVCVTTQVGCNIGCTFCASGLIKKQRDLNNGEITAQIMLVQKYFDERGQGERVSHIVVMGIGEPFDNYTNVLKFLRTVNDDNGLAIGARHITVSTSGLAHKIREFANEGVQVNLAVSLHAPNNDLRSSIMRINRSFPLEKLFAAIEYYIETTNRRVTFEYIMLNGVNDTPENAQELADLTKKIRKLSYVNLIPYNPVSEHDQYSRSPKERVEAFYDVLKKNGVNCVVRQEHGTDIDAACGQLRSNTMKRDRQKAKVGQ.

E100 serves as the catalytic Proton acceptor. One can recognise a Radical SAM core domain in the interval 106–344; it reads QHYGLSVCVT…CVVRQEHGTD (239 aa). A disulfide bridge connects residues C113 and C349. The [4Fe-4S] cluster site is built by C120, C124, and C127. S-adenosyl-L-methionine-binding positions include 172–173, S204, 227–229, and N305; these read GE and SLH. The active-site S-methylcysteine intermediate is C349.

It belongs to the radical SAM superfamily. RlmN family. It depends on [4Fe-4S] cluster as a cofactor.

Its subcellular location is the cytoplasm. The enzyme catalyses adenosine(2503) in 23S rRNA + 2 reduced [2Fe-2S]-[ferredoxin] + 2 S-adenosyl-L-methionine = 2-methyladenosine(2503) in 23S rRNA + 5'-deoxyadenosine + L-methionine + 2 oxidized [2Fe-2S]-[ferredoxin] + S-adenosyl-L-homocysteine. It catalyses the reaction adenosine(37) in tRNA + 2 reduced [2Fe-2S]-[ferredoxin] + 2 S-adenosyl-L-methionine = 2-methyladenosine(37) in tRNA + 5'-deoxyadenosine + L-methionine + 2 oxidized [2Fe-2S]-[ferredoxin] + S-adenosyl-L-homocysteine. Functionally, specifically methylates position 2 of adenine 2503 in 23S rRNA and position 2 of adenine 37 in tRNAs. This Streptococcus agalactiae serotype V (strain ATCC BAA-611 / 2603 V/R) protein is Probable dual-specificity RNA methyltransferase RlmN.